Consider the following 234-residue polypeptide: Leucyl/phenylalanyl-tRNA--protein transferase (234 aa).

This sequence belongs to the L/F-transferase family.

Its subcellular location is the cytoplasm. The enzyme catalyses N-terminal L-lysyl-[protein] + L-leucyl-tRNA(Leu) = N-terminal L-leucyl-L-lysyl-[protein] + tRNA(Leu) + H(+). It catalyses the reaction N-terminal L-arginyl-[protein] + L-leucyl-tRNA(Leu) = N-terminal L-leucyl-L-arginyl-[protein] + tRNA(Leu) + H(+). It carries out the reaction L-phenylalanyl-tRNA(Phe) + an N-terminal L-alpha-aminoacyl-[protein] = an N-terminal L-phenylalanyl-L-alpha-aminoacyl-[protein] + tRNA(Phe). Functions in the N-end rule pathway of protein degradation where it conjugates Leu, Phe and, less efficiently, Met from aminoacyl-tRNAs to the N-termini of proteins containing an N-terminal arginine or lysine. This is Leucyl/phenylalanyl-tRNA--protein transferase from Salmonella agona (strain SL483).